The chain runs to 287 residues: Polyamine aminopropyltransferase (287 aa).

Positions 9–242 constitute a PABS domain; the sequence is GSWLDEYQND…GIWSWTFASI (234 aa). An S-methyl-5'-thioadenosine-binding site is contributed by Gln-36. His-67 and Asp-91 together coordinate spermidine. S-methyl-5'-thioadenosine contacts are provided by residues Glu-111 and 143–144; that span reads NG. Catalysis depends on Asp-162, which acts as the Proton acceptor. Pro-169 is an S-methyl-5'-thioadenosine binding site.

The protein belongs to the spermidine/spermine synthase family. In terms of assembly, homodimer or homotetramer.

The protein localises to the cytoplasm. The enzyme catalyses S-adenosyl 3-(methylsulfanyl)propylamine + putrescine = S-methyl-5'-thioadenosine + spermidine + H(+). It participates in amine and polyamine biosynthesis; spermidine biosynthesis; spermidine from putrescine: step 1/1. In terms of biological role, catalyzes the irreversible transfer of a propylamine group from the amino donor S-adenosylmethioninamine (decarboxy-AdoMet) to putrescine (1,4-diaminobutane) to yield spermidine. The sequence is that of Polyamine aminopropyltransferase from Prochlorococcus marinus (strain SARG / CCMP1375 / SS120).